The chain runs to 353 residues: DNA integrity scanning protein DisA (353 aa).

Positions 6–144 (DKELMNILKI…GGIKYVLRDS (139 aa)) constitute a DAC domain. ATP is bound by residues glycine 73, leucine 91, and 104-108 (TRHRT).

Belongs to the DisA family. As to quaternary structure, homooctamer. Mg(2+) is required as a cofactor.

The enzyme catalyses 2 ATP = 3',3'-c-di-AMP + 2 diphosphate. Participates in a DNA-damage check-point that is active prior to asymmetric division when DNA is damaged. DisA forms globular foci that rapidly scan along the chromosomes during sporulation, searching for lesions. When a lesion is present, DisA pauses at the lesion site. This triggers a cellular response that culminates in a temporary block in sporulation initiation. Functionally, also has diadenylate cyclase activity, catalyzing the condensation of 2 ATP molecules into cyclic di-AMP (c-di-AMP). c-di-AMP acts as a signaling molecule that couples DNA integrity with progression of sporulation. The rise in c-di-AMP level generated by DisA while scanning the chromosome, operates as a positive signal that advances sporulation; upon encountering a lesion, the DisA focus arrests at the damaged site and halts c-di-AMP synthesis. The protein is DNA integrity scanning protein DisA of Clostridium botulinum (strain 657 / Type Ba4).